The sequence spans 99 residues: Large ribosomal subunit protein bL28 (99 aa).

It belongs to the bacterial ribosomal protein bL28 family.

This is Large ribosomal subunit protein bL28 from Rhizobium leguminosarum bv. trifolii (strain WSM2304).